Consider the following 669-residue polypeptide: UvrABC system protein B (669 aa).

Residues 26-183 (TNFHAGIAKQ…RHLTELQYTR (158 aa)) enclose the Helicase ATP-binding domain. Position 39–46 (39–46 (GVTGSGKT)) interacts with ATP. The Beta-hairpin motif lies at 92-115 (YYDYYQPEAYVPASDTFIEKDSSI). Residues 431 to 597 (QVDDLISQIN…SVVRPISDIL (167 aa)) enclose the Helicase C-terminal domain. The UVR domain occupies 631–666 (AAQMKVLEQKMYQHARDLEFEDAARIRDQIQRLREA).

This sequence belongs to the UvrB family. Forms a heterotetramer with UvrA during the search for lesions. Interacts with UvrC in an incision complex.

The protein localises to the cytoplasm. The UvrABC repair system catalyzes the recognition and processing of DNA lesions. A damage recognition complex composed of 2 UvrA and 2 UvrB subunits scans DNA for abnormalities. Upon binding of the UvrA(2)B(2) complex to a putative damaged site, the DNA wraps around one UvrB monomer. DNA wrap is dependent on ATP binding by UvrB and probably causes local melting of the DNA helix, facilitating insertion of UvrB beta-hairpin between the DNA strands. Then UvrB probes one DNA strand for the presence of a lesion. If a lesion is found the UvrA subunits dissociate and the UvrB-DNA preincision complex is formed. This complex is subsequently bound by UvrC and the second UvrB is released. If no lesion is found, the DNA wraps around the other UvrB subunit that will check the other stand for damage. This chain is UvrABC system protein B, found in Xylella fastidiosa (strain M23).